The sequence spans 309 residues: Beta-lactamase (309 aa).

The signal sequence occupies residues 1-28 (MMILKNKRMLKIGICVGILGLSITSLEA). The Acyl-ester intermediate role is filled by serine 92. Glutamate 188 functions as the Proton acceptor in the catalytic mechanism. 254 to 256 (KSG) is a substrate binding site.

It belongs to the class-A beta-lactamase family.

It carries out the reaction a beta-lactam + H2O = a substituted beta-amino acid. This protein is a beta-lactamase with a substrate specificity for penicillins. This Bacillus thuringiensis protein is Beta-lactamase (bla).